We begin with the raw amino-acid sequence, 179 residues long: ATP synthase subunit delta (179 aa).

The protein belongs to the ATPase delta chain family. As to quaternary structure, F-type ATPases have 2 components, F(1) - the catalytic core - and F(0) - the membrane proton channel. F(1) has five subunits: alpha(3), beta(3), gamma(1), delta(1), epsilon(1). F(0) has three main subunits: a(1), b(2) and c(10-14). The alpha and beta chains form an alternating ring which encloses part of the gamma chain. F(1) is attached to F(0) by a central stalk formed by the gamma and epsilon chains, while a peripheral stalk is formed by the delta and b chains.

The protein localises to the cell membrane. F(1)F(0) ATP synthase produces ATP from ADP in the presence of a proton or sodium gradient. F-type ATPases consist of two structural domains, F(1) containing the extramembraneous catalytic core and F(0) containing the membrane proton channel, linked together by a central stalk and a peripheral stalk. During catalysis, ATP synthesis in the catalytic domain of F(1) is coupled via a rotary mechanism of the central stalk subunits to proton translocation. In terms of biological role, this protein is part of the stalk that links CF(0) to CF(1). It either transmits conformational changes from CF(0) to CF(1) or is implicated in proton conduction. The protein is ATP synthase subunit delta of Listeria monocytogenes serotype 4b (strain CLIP80459).